The sequence spans 130 residues: Ribosome-binding factor A (130 aa).

It belongs to the RbfA family. In terms of assembly, monomer. Binds 30S ribosomal subunits, but not 50S ribosomal subunits or 70S ribosomes.

The protein resides in the cytoplasm. Functionally, one of several proteins that assist in the late maturation steps of the functional core of the 30S ribosomal subunit. Associates with free 30S ribosomal subunits (but not with 30S subunits that are part of 70S ribosomes or polysomes). Required for efficient processing of 16S rRNA. May interact with the 5'-terminal helix region of 16S rRNA. The chain is Ribosome-binding factor A from Pseudomonas aeruginosa (strain LESB58).